A 646-amino-acid polypeptide reads, in one-letter code: Amyloid beta A4 precursor protein-binding family B member 1-interacting protein (646 aa).

A disordered region spans residues 82–141 (FATERDTSKGSVPVAPAPSKPQSNFSLPASFDSSKPATSSNSIAAPPPPPAFKPSKEEEE). Residues 101-116 (KPQSNFSLPASFDSSK) are compositionally biased toward polar residues. The region spanning 162–248 (KKLVVKVEIT…NKVLFQEKKH (87 aa)) is the Ras-associating domain. The region spanning 292–401 (VPDLEGVLYL…WVTGIRVAKY (110 aa)) is the PH domain. Residues 420-646 (ASWANRTIQA…NAMQKKRTQP (227 aa)) form a disordered region. Positions 429 to 445 (ASSTASTPSPTPKAKAA) are enriched in low complexity. Composition is skewed to pro residues over residues 465 to 500 (LPPPPPSMDFLPPPPPDPMFPPPPPAPPAPPAPPVP), 509 to 536 (FPPPPKFPQSSFPPPPMDDLPPPPPPPE), 560 to 577 (LPPPPPDPVASLPPPPPA), and 584 to 598 (APPPPPPPPPPPAPA).

This sequence belongs to the MRL family.

It localises to the cell membrane. The protein resides in the cytoplasm. The protein localises to the cytoskeleton. Its function is as follows. Appears to function in the signal transduction from Ras activation to actin cytoskeletal remodeling. The chain is Amyloid beta A4 precursor protein-binding family B member 1-interacting protein (apbb1ip) from Danio rerio (Zebrafish).